A 417-amino-acid chain; its full sequence is Sterile alpha motif domain-containing protein 14 (417 aa).

The interval 37–306 (LLVKGRRHRP…QETKCSYPYH (270 aa)) is disordered. A compositionally biased stretch (basic residues) spans 40–49 (KGRRHRPSRS). Phosphoserine is present on residues serine 84 and serine 108. Residues 138–153 (SGSPPRSAPSSDSSPS) are compositionally biased toward low complexity. The span at 159–173 (PRAEPHSEDDSRDAS) shows a compositional bias: basic and acidic residues. A phosphoserine mark is found at serine 173 and serine 179. Composition is skewed to low complexity over residues 244-260 (SGKG…PTCS) and 276-289 (STLS…SSSP). Residue serine 279 is modified to Phosphoserine. Threonine 283 is modified (phosphothreonine). Positions 326–389 (WTSQQVGQWL…KRKLKELAAA (64 aa)) constitute an SAM domain. Residues 375–416 (DRALVKRKLKELAAAAEKERKAQEKTARQREKLRRREHEAKK) adopt a coiled-coil conformation. The interval 390–417 (AEKERKAQEKTARQREKLRRREHEAKKS) is disordered.

This is Sterile alpha motif domain-containing protein 14 (Samd14) from Rattus norvegicus (Rat).